We begin with the raw amino-acid sequence, 211 residues long: Ubiquitin-conjugating enzyme E2 S-C (211 aa).

In terms of domain architecture, UBC core spans 11–157 (HIIRRVYKEV…AKLMTEIHAQ (147 aa)). Catalysis depends on C95, which acts as the Glycyl thioester intermediate. The tract at residues 158 to 211 (GSTLRGKDPTDPCSSASATVVSGDGPMAKKHAGDRDKKLAAKKKTDKKRALRRL) is disordered. Residues 197 to 211 (AAKKKTDKKRALRRL) show a composition bias toward basic residues.

This sequence belongs to the ubiquitin-conjugating enzyme family.

It carries out the reaction S-ubiquitinyl-[E1 ubiquitin-activating enzyme]-L-cysteine + [E2 ubiquitin-conjugating enzyme]-L-cysteine = [E1 ubiquitin-activating enzyme]-L-cysteine + S-ubiquitinyl-[E2 ubiquitin-conjugating enzyme]-L-cysteine.. The protein operates within protein modification; protein ubiquitination. Its function is as follows. Catalyzes the covalent attachment of ubiquitin to other proteins. Acts as an essential factor of the anaphase promoting complex/cyclosome (APC/C), a cell cycle-regulated ubiquitin ligase that controls progression through mitosis. Acts by specifically elongating 'Lys-11'-linked polyubiquitin chains initiated by the E2 enzyme ube2c/ubch10 on APC/C substrates, enhancing the degradation of APC/C substrates by the proteasome and promoting mitotic exit. This is Ubiquitin-conjugating enzyme E2 S-C (ube2s-c) from Xenopus laevis (African clawed frog).